Here is a 214-residue protein sequence, read N- to C-terminus: Putative pit accessory protein (214 aa).

It belongs to the UPF0111 family.

Functionally, could be involved in orthophosphate transport. This Rhizobium meliloti (strain 1021) (Ensifer meliloti) protein is Putative pit accessory protein.